A 279-amino-acid chain; its full sequence is Dermonecrotic toxin LrSicTox-alphaIA1i (279 aa).

Residue H11 is part of the active site. Mg(2+) contacts are provided by E31 and D33. Residue H47 is the Nucleophile of the active site. 2 disulfides stabilise this stretch: C51-C57 and C53-C196. Position 91 (D91) interacts with Mg(2+). An N-linked (GlcNAc...) asparagine glycan is attached at N256.

It belongs to the arthropod phospholipase D family. Class II subfamily. The cofactor is Mg(2+). As to expression, expressed by the venom gland.

It is found in the secreted. It carries out the reaction an N-(acyl)-sphingosylphosphocholine = an N-(acyl)-sphingosyl-1,3-cyclic phosphate + choline. It catalyses the reaction an N-(acyl)-sphingosylphosphoethanolamine = an N-(acyl)-sphingosyl-1,3-cyclic phosphate + ethanolamine. The enzyme catalyses a 1-acyl-sn-glycero-3-phosphocholine = a 1-acyl-sn-glycero-2,3-cyclic phosphate + choline. The catalysed reaction is a 1-acyl-sn-glycero-3-phosphoethanolamine = a 1-acyl-sn-glycero-2,3-cyclic phosphate + ethanolamine. With respect to regulation, inhibited with low affinity by edelfosine. In terms of biological role, dermonecrotic toxins cleave the phosphodiester linkage between the phosphate and headgroup of certain phospholipids (sphingolipid and lysolipid substrates), forming an alcohol (often choline) and a cyclic phosphate. This toxin acts on sphingomyelin (SM). It also acts on a broad range of lysophospholipids, like lysophosphatidylinositol (LPI), lysophosphatidylglycerol (LPG), lysophosphatidylethanolamine (LPE), lysobisphosphatidic acid (LBPA), lysophosphatidylserine (LPS) and lysophosphatidylcholines (LPC) of varying chain lengths. The substrate preference is LPI &gt; LPG &gt; LPS &gt; LPC &gt;&gt; LPE, LBPA. Furthermore, the enzyme also act on cyclic phosphatidic acid and lyso-platelet activating factor (LPAF, an alkyl-LPC). The enzyme does not act on sphingosylphosphorylcholine (SPC, also known as lyso-sphingomyelin) and PAF. The toxin may also act on ceramide phosphoethanolamine (CPE). It acts by transphosphatidylation, releasing exclusively cyclic phosphate products as second products. It does not exhibit detectable PLA1/2 activity. It induces dose-dependent hemolysis and dermonecrosis. Also induces increased vascular permeability, edema, inflammatory response, and platelet aggregation. The polypeptide is Dermonecrotic toxin LrSicTox-alphaIA1i (Loxosceles reclusa (Brown recluse spider)).